Consider the following 619-residue polypeptide: ATP-dependent RNA helicase dbp9 (619 aa).

The interval 1-30 is disordered; that stretch reads MKRKLDANDVPSTEVAEEKETKDADNTDFE. Residues 16–25 show a composition bias toward basic and acidic residues; it reads AEEKETKDAD. The short motif at 27–55 is the Q motif element; sequence TDFESLNLDPRLRQALIREQFTKPTPVQS. The 179-residue stretch at 58 to 236 folds into the Helicase ATP-binding domain; that stretch reads IPLALEGKDI…GLFCRSPVIL (179 aa). 71–78 lines the ATP pocket; that stretch reads AKTGSGKT. A DEAD box motif is present at residues 184-187; that stretch reads DEAD. The region spanning 247–484 is the Helicase C-terminal domain; the sequence is GISQFVVRCA…EVKPYHFEMK (238 aa). Disordered stretches follow at residues 339–390 and 582–619; these read SRTS…GKAK and GDNRIRKAREKNRGKGKGRKPSGVRKVDPLKTFNRGRK. Over residues 345-362 the composition is skewed to basic and acidic residues; the sequence is KSKEATDGDDEAKDKMGS. Over residues 587 to 604 the composition is skewed to basic residues; that stretch reads RKAREKNRGKGKGRKPSG.

This sequence belongs to the DEAD box helicase family. DDX56/DBP9 subfamily.

It localises to the nucleus. It is found in the nucleolus. The catalysed reaction is ATP + H2O = ADP + phosphate + H(+). In terms of biological role, ATP-binding RNA helicase involved in the biogenesis of 60S ribosomal subunits and is required for the normal formation of 25S and 5.8S rRNAs. This is ATP-dependent RNA helicase dbp9 (dbp9) from Neosartorya fischeri (strain ATCC 1020 / DSM 3700 / CBS 544.65 / FGSC A1164 / JCM 1740 / NRRL 181 / WB 181) (Aspergillus fischerianus).